We begin with the raw amino-acid sequence, 129 residues long: Ribosome-binding factor A (129 aa).

Belongs to the RbfA family. Monomer. Binds 30S ribosomal subunits, but not 50S ribosomal subunits or 70S ribosomes.

Its subcellular location is the cytoplasm. In terms of biological role, one of several proteins that assist in the late maturation steps of the functional core of the 30S ribosomal subunit. Associates with free 30S ribosomal subunits (but not with 30S subunits that are part of 70S ribosomes or polysomes). Required for efficient processing of 16S rRNA. May interact with the 5'-terminal helix region of 16S rRNA. This Azotobacter vinelandii (strain DJ / ATCC BAA-1303) protein is Ribosome-binding factor A.